A 182-amino-acid polypeptide reads, in one-letter code: Peptidyl-tRNA hydrolase (182 aa).

Tyr-14 provides a ligand contact to tRNA. His-19 (proton acceptor) is an active-site residue. Phe-64, Asn-66, and Asn-112 together coordinate tRNA.

It belongs to the PTH family. In terms of assembly, monomer.

The protein resides in the cytoplasm. It catalyses the reaction an N-acyl-L-alpha-aminoacyl-tRNA + H2O = an N-acyl-L-amino acid + a tRNA + H(+). Its function is as follows. Hydrolyzes ribosome-free peptidyl-tRNAs (with 1 or more amino acids incorporated), which drop off the ribosome during protein synthesis, or as a result of ribosome stalling. In terms of biological role, catalyzes the release of premature peptidyl moieties from peptidyl-tRNA molecules trapped in stalled 50S ribosomal subunits, and thus maintains levels of free tRNAs and 50S ribosomes. This is Peptidyl-tRNA hydrolase from Wolbachia sp. subsp. Drosophila simulans (strain wRi).